The sequence spans 329 residues: Putative glucose-6-phosphate 1-epimerase (329 aa).

Residues 1 to 13 (MAAPAPAGAAASP) show a composition bias toward low complexity. A disordered region spans residues 1–20 (MAAPAPAGAAASPSPKPQLP). Arginine 82, glutamine 100, and arginine 105 together coordinate substrate. Residue histidine 183 is part of the active site. Aspartate 228 serves as a coordination point for substrate. Glutamate 287 is an active-site residue.

It belongs to the glucose-6-phosphate 1-epimerase family.

It carries out the reaction alpha-D-glucose 6-phosphate = beta-D-glucose 6-phosphate. In Cenchrus ciliaris (Buffelgrass), this protein is Putative glucose-6-phosphate 1-epimerase.